The following is a 943-amino-acid chain: Isoleucine--tRNA ligase (943 aa).

The 'HIGH' region signature appears at 58 to 68 (PYANGSIHIGH). Glu567 contributes to the L-isoleucyl-5'-AMP binding site. The 'KMSKS' region signature appears at 608–612 (KMSKS). Lys611 is a binding site for ATP. Positions 906, 909, 926, and 929 each coordinate Zn(2+).

This sequence belongs to the class-I aminoacyl-tRNA synthetase family. IleS type 1 subfamily. Monomer. It depends on Zn(2+) as a cofactor.

It is found in the cytoplasm. The enzyme catalyses tRNA(Ile) + L-isoleucine + ATP = L-isoleucyl-tRNA(Ile) + AMP + diphosphate. Catalyzes the attachment of isoleucine to tRNA(Ile). As IleRS can inadvertently accommodate and process structurally similar amino acids such as valine, to avoid such errors it has two additional distinct tRNA(Ile)-dependent editing activities. One activity is designated as 'pretransfer' editing and involves the hydrolysis of activated Val-AMP. The other activity is designated 'posttransfer' editing and involves deacylation of mischarged Val-tRNA(Ile). The sequence is that of Isoleucine--tRNA ligase from Pseudomonas aeruginosa (strain UCBPP-PA14).